The chain runs to 153 residues: Flagellar assembly factor FliW (153 aa).

Belongs to the FliW family. In terms of assembly, interacts with translational regulator CsrA and flagellin(s).

The protein localises to the cytoplasm. In terms of biological role, acts as an anti-CsrA protein, binds CsrA and prevents it from repressing translation of its target genes, one of which is flagellin. Binds to flagellin and participates in the assembly of the flagellum. The protein is Flagellar assembly factor FliW of Leptospira biflexa serovar Patoc (strain Patoc 1 / Ames).